The primary structure comprises 999 residues: Sarcoplasmic/endoplasmic reticulum calcium ATPase 3 (999 aa).

An N-acetylmethionine modification is found at Met-1. Residues 1–48 (MEEAHLLSAADVLRRFSVTAEGGLTLEQVTDARERYGPNELPTEEGKS) lie on the Cytoplasmic side of the membrane. A Phosphoserine modification is found at Ser-17. Phosphothreonine is present on Thr-19. Residues 49 to 69 (LWELVVEQFEDLLVRILLLAA) traverse the membrane as a helical segment. Residues 70–89 (LVSFVLAWFEEGEETTTAFV) lie on the Lumenal side of the membrane. A helical membrane pass occupies residues 90-110 (EPLVIMLILVANAIVGVWQER). The Cytoplasmic portion of the chain corresponds to 111-253 (NAESAIEALK…PERTPLQRKL (143 aa)). The chain crosses the membrane as a helical span at residues 254 to 273 (DEFGRQLSHAISVICVAVWV). The Lumenal portion of the chain corresponds to 274-295 (INIGHFADPAHGGSWLRGAVYY). Residues 296-313 (FKIAVALAVAAIPEGLPA) traverse the membrane as a helical segment. Positions 304, 305, 307, and 309 each coordinate Ca(2+). Residues 314 to 757 (VITTCLALGT…EEGRAIYNNM (444 aa)) lie on the Cytoplasmic side of the membrane. The 4-aspartylphosphate intermediate role is filled by Asp-351. Asp-351 and Thr-353 together coordinate Mg(2+). Thr-353 lines the ATP pocket. Positions 370 to 400 (AEAEAGACRLHEFTISGTTYTPEGEVRQGEQ) are interaction with phospholamban 1. Thr-415 carries the post-translational modification Phosphothreonine. The ATP site is built by Glu-442, Arg-489, Lys-515, Arg-560, Thr-625, Gly-626, and Asp-627. Ser-662 is subject to Phosphoserine. Residues Arg-678 and Lys-684 each coordinate ATP. Asp-703 serves as a coordination point for Mg(2+). Asn-706 is an ATP binding site. A helical transmembrane segment spans residues 758–777 (KQFIRYLISSNVGEVVCIFL). Ca(2+) contacts are provided by Asn-768 and Glu-771. Residues 778–787 (TAILGLPEAL) are Lumenal-facing. The helical transmembrane segment at 788–808 (IPVQLLWVNLVTDGLPATALG) threads the bilayer. Residues 788-808 (IPVQLLWVNLVTDGLPATALG) are interaction with phospholamban 2. 3 residues coordinate Ca(2+): Asn-796, Thr-799, and Asp-800. Topologically, residues 809-828 (FNPPDLDIMEKLPRNPREAL) are cytoplasmic. The chain crosses the membrane as a helical span at residues 829 to 851 (ISGWLFFRYLAIGVYVGLATVAA). Topologically, residues 852–897 (ATWWFLYDAEGPQVTFHQLRNFLKCSEDNPLFAGIDCEVFESRFPT) are lumenal. A helical transmembrane segment spans residues 898–917 (TMALSVLVTIEMCNALNSVS). Residue Glu-908 coordinates Ca(2+). The Cytoplasmic portion of the chain corresponds to 918-930 (ENQSLLRMPPWLN). The helical transmembrane segment at 931-949 (PWLLGAVVMSMALHFLILL) threads the bilayer. Topologically, residues 950–964 (VPPLPLIFQVTPLSG) are lumenal. The chain crosses the membrane as a helical span at residues 965 to 985 (RQWGVVLQMSLPVILLDEALK). Residues 986-999 (YLSRHHVDEKKDLK) lie on the Cytoplasmic side of the membrane.

It belongs to the cation transport ATPase (P-type) (TC 3.A.3) family. Type IIA subfamily. Interacts with sarcolipin (SLN). Interacts with phospholamban (PLN). Interacts with myoregulin (MRLN). Interacts with DWORF. Interacts with VMP1. Interacts with TUNAR; the interaction occurs at low levels in low glucose conditions and is increased by high glucose levels. Mg(2+) serves as cofactor. As to expression, found in most tissues. Most abundant in large and small intestine, spleen and lung. Also detected in PC12 cells.

Its subcellular location is the endoplasmic reticulum membrane. It is found in the sarcoplasmic reticulum membrane. The enzyme catalyses Ca(2+)(in) + ATP + H2O = Ca(2+)(out) + ADP + phosphate + H(+). Its activity is regulated as follows. Inhibited by sarcolipin (SLN), phospholamban (PLN) and myoregulin (MRLN). Enhanced by DWORF; DWORF increases activity by displacing sarcolipin (SLN), phospholamban (PLN) and myoregulin (MRLN). This magnesium-dependent enzyme catalyzes the hydrolysis of ATP coupled with the transport of the calcium. Transports calcium ions from the cytosol into the sarcoplasmic/endoplasmic reticulum lumen. Contributes to calcium sequestration involved in muscular excitation/contraction. Its function is as follows. This magnesium-dependent enzyme catalyzes the hydrolysis of ATP coupled with the transport of calcium. Transports calcium ions from the cytosol into the sarcoplasmic/endoplasmic reticulum lumen. Contributes to calcium sequestration involved in muscular excitation/contraction. This is Sarcoplasmic/endoplasmic reticulum calcium ATPase 3 (Atp2a3) from Rattus norvegicus (Rat).